The sequence spans 1537 residues: Flocculation protein FLO1 (1537 aa).

A signal peptide spans 1 to 24; that stretch reads MTMPHRYMFLAVFTLLALTSVASG. Residues 74-249 form the PA14 domain; sequence GGQTDISIDY…GTTVSDDFEG (176 aa). N-linked (GlcNAc...) asparagine glycosylation is found at Asn135 and Asn187. The interval 197–240 is sugar recognition; that stretch reads GGSLPPNIEGTVYMYAGYYYPMKVVYSNAVSWGTLPISVTLPDG. An N-linked (GlcNAc...) asparagine glycan is attached at Asn262. Tandem repeats lie at residues 278–322, 323–367, 368–412, 413–457, 458–502, 503–547, 548–592, 593–637, 638–682, 683–727, 728–772, 773–817, 818–862, 863–907, 908–952, 953–997, 998–1042, and 1043–1087. An 18 X 45 AA approximate tandem repeats, Thr-rich region spans residues 278-1087; it reads TTTEPWTGTF…KTPTTAISSS (810 aa). N-linked (GlcNAc...) asparagine glycans are attached at residues Asn329, Asn374, Asn419, Asn464, Asn509, Asn554, Asn599, Asn644, Asn689, and Asn734. Disordered stretches follow at residues 770-799 and 860-889; these read LIST…NGQP. The span at 773 to 795 shows a compositional bias: low complexity; that stretch reads TTTEPWTGTFTSTSTEMTTVTGT. Over residues 863 to 885 the composition is skewed to low complexity; that stretch reads TTTEPWTGTFTSTSTEMTTITGT. Residues 995–1024 form a disordered region; sequence LISTTTEPWTGTFTSTSTEMTTVTGTNGQP. Residues 998–1020 are compositionally biased toward low complexity; it reads TTTEPWTGTFTSTSTEMTTVTGT. An N-linked (GlcNAc...) asparagine glycan is attached at Asn1114. Tandem repeats lie at residues 1118 to 1137 and 1138 to 1157. The segment at 1118-1157 is 2 X 20 AA approximate tandem repeats, Ser/Thr-rich; it reads VISSSVISSSVTSSLFTSSPVISSSVISSSTTTSTSIFSE. The segment covering 1161–1220 has biased composition (low complexity); it reads SSVIPTSSSTSGSSESETSSAGSVSSSSFISSESSKSPTYSSSSLPLVTSATTSQETASS. The tract at residues 1161-1232 is disordered; it reads SSVIPTSSST…PATTTKTSEQ (72 aa). Over residues 1222-1232 the composition is skewed to polar residues; it reads PPATTTKTSEQ. A run of 6 repeats spans residues 1226-1276, 1291-1341, 1342-1392, 1408-1416, 1417-1425, and 1426-1434. The 3 X 51 AA approximate repeats, Ser/Thr-rich stretch occupies residues 1226-1392; sequence TTKTSEQTTL…TVYPTWRPQT (167 aa). Positions 1392-1404 are enriched in polar residues; sequence TANEESVSSKMNS. A disordered region spans residues 1392–1414; that stretch reads TANEESVSSKMNSATGETTTNTL. The span at 1405–1414 shows a compositional bias: low complexity; sequence ATGETTTNTL. A 3 X 9 AA approximate tandem repeats, Thr-rich region spans residues 1408 to 1434; sequence ETTTNTLAAETTTNTVAAETITNTGAA. A disordered region spans residues 1468 to 1497; the sequence is VSVSETGNTKSLTSSGLSTMSQQPRSTPAS. A compositionally biased stretch (polar residues) spans 1472–1497; the sequence is ETGNTKSLTSSGLSTMSQQPRSTPAS. Gly1514 carries the GPI-anchor amidated glycine lipid modification. A propeptide spans 1515–1537 (removed in mature form); that stretch reads SANSLLAGSGLSVFIASLLLAII.

It belongs to the flocculin family. In terms of processing, extensively N- and O-glycosylated. Post-translationally, the GPI-anchor is attached to the protein in the endoplasmic reticulum and serves to target the protein to the cell surface. There, the glucosamine-inositol phospholipid moiety is cleaved off and the GPI-modified mannoprotein is covalently attached via its lipidless GPI glycan remnant to the 1,6-beta-glucan of the outer cell wall layer.

It localises to the cell membrane. It is found in the secreted. The protein resides in the cell wall. In terms of biological role, cell wall protein that participates directly in adhesive cell-cell interactions during yeast flocculation, a reversible, asexual and Ca(2+)-dependent process in which cells adhere to form aggregates (flocs) consisting of thousands of cells. The lectin-like protein sticks out of the cell wall of flocculent cells and selectively binds mannose residues in the cell walls of adjacent cells. Activity is inhibited by mannose, but not by glucose, maltose, sucrose or galactose. Also involved in cell-substrate adhesion. The polypeptide is Flocculation protein FLO1 (FLO1) (Saccharomyces cerevisiae (strain ATCC 204508 / S288c) (Baker's yeast)).